Consider the following 362-residue polypeptide: Dihydroorotate dehydrogenase (quinone) (362 aa).

FMN-binding positions include 62–66 and Thr86; that span reads AGYDK. Lys66 serves as a coordination point for substrate. 111–115 is a substrate binding site; it reads NRLGF. Residues Asn139 and Asn170 each contribute to the FMN site. Asn170 provides a ligand contact to substrate. The active-site Nucleophile is the Ser173. Asn175 serves as a coordination point for substrate. Positions 215 and 243 each coordinate FMN. Residue 244 to 245 coordinates substrate; it reads NT. FMN contacts are provided by residues Gly266, Gly295, and 316–317; that span reads YS.

The protein belongs to the dihydroorotate dehydrogenase family. Type 2 subfamily. As to quaternary structure, monomer. FMN is required as a cofactor.

It localises to the cell membrane. The enzyme catalyses (S)-dihydroorotate + a quinone = orotate + a quinol. The protein operates within pyrimidine metabolism; UMP biosynthesis via de novo pathway; orotate from (S)-dihydroorotate (quinone route): step 1/1. Catalyzes the conversion of dihydroorotate to orotate with quinone as electron acceptor. In Rhizobium leguminosarum bv. trifolii (strain WSM2304), this protein is Dihydroorotate dehydrogenase (quinone).